A 330-amino-acid chain; its full sequence is Aspartate--ammonia ligase (330 aa).

This sequence belongs to the class-II aminoacyl-tRNA synthetase family. AsnA subfamily.

Its subcellular location is the cytoplasm. The enzyme catalyses L-aspartate + NH4(+) + ATP = L-asparagine + AMP + diphosphate + H(+). The protein operates within amino-acid biosynthesis; L-asparagine biosynthesis; L-asparagine from L-aspartate (ammonia route): step 1/1. The sequence is that of Aspartate--ammonia ligase from Haemophilus influenzae (strain PittEE).